The chain runs to 63 residues: Large ribosomal subunit protein bL28c (63 aa).

It belongs to the bacterial ribosomal protein bL28 family.

It localises to the plastid. It is found in the chloroplast. The sequence is that of Large ribosomal subunit protein bL28c from Pyropia yezoensis (Susabi-nori).